The sequence spans 279 residues: Putative pyruvate, phosphate dikinase regulatory protein (279 aa).

ADP is bound at residue 153–160 (GVSRTSKT).

This sequence belongs to the pyruvate, phosphate/water dikinase regulatory protein family. PDRP subfamily.

It carries out the reaction N(tele)-phospho-L-histidyl/L-threonyl-[pyruvate, phosphate dikinase] + ADP = N(tele)-phospho-L-histidyl/O-phospho-L-threonyl-[pyruvate, phosphate dikinase] + AMP + H(+). The catalysed reaction is N(tele)-phospho-L-histidyl/O-phospho-L-threonyl-[pyruvate, phosphate dikinase] + phosphate + H(+) = N(tele)-phospho-L-histidyl/L-threonyl-[pyruvate, phosphate dikinase] + diphosphate. Bifunctional serine/threonine kinase and phosphorylase involved in the regulation of the pyruvate, phosphate dikinase (PPDK) by catalyzing its phosphorylation/dephosphorylation. The polypeptide is Putative pyruvate, phosphate dikinase regulatory protein (Rhodopseudomonas palustris (strain HaA2)).